The sequence spans 226 residues: Phosphoglycolate phosphatase (226 aa).

Residue Asp-5 is the Nucleophile of the active site. Residues Asp-5 and Asp-7 each coordinate Mg(2+). Lys-142 is a substrate binding site. Mg(2+) contacts are provided by Asp-164 and Asp-168.

This sequence belongs to the archaeal SPP-like hydrolase family. The cofactor is Mg(2+).

It carries out the reaction 2-phosphoglycolate + H2O = glycolate + phosphate. Its function is as follows. Catalyzes the dephosphorylation of 2-phosphoglycolate. The protein is Phosphoglycolate phosphatase of Sulfurisphaera tokodaii (strain DSM 16993 / JCM 10545 / NBRC 100140 / 7) (Sulfolobus tokodaii).